A 250-amino-acid chain; its full sequence is Probable transcriptional regulatory protein Ctha_1786 (250 aa).

It belongs to the TACO1 family.

Its subcellular location is the cytoplasm. The polypeptide is Probable transcriptional regulatory protein Ctha_1786 (Chloroherpeton thalassium (strain ATCC 35110 / GB-78)).